We begin with the raw amino-acid sequence, 64 residues long: Small ribosomal subunit protein bS21 (64 aa).

The tract at residues 42 to 64 (KKEKEKAAAKKRNKYNKRRSFYY) is disordered. The span at 50 to 64 (AKKRNKYNKRRSFYY) shows a compositional bias: basic residues.

It belongs to the bacterial ribosomal protein bS21 family.

This is Small ribosomal subunit protein bS21 from Malacoplasma penetrans (strain HF-2) (Mycoplasma penetrans).